Reading from the N-terminus, the 540-residue chain is CUB domain-containing protein 2 (540 aa).

Residues 1–22 (MLAEWGACLLLAVALLGPGLQA) form the signal peptide. Over 23 to 516 (QAMEGVKCGG…VSMVAQDTSD (494 aa)) the chain is Extracellular. Intrachain disulfides connect C30/C56, C83/C106, C145/C171, C198/C218, C257/C283, and C314/C336. CUB domains follow at residues 30 to 143 (CGGV…YQKD), 145 to 255 (CGGV…YFSG), and 257 to 373 (CQEV…YIGV). N-linked (GlcNAc...) asparagine glycosylation is present at N40. N-linked (GlcNAc...) asparagine glycosylation is present at N267. N377, N435, and N436 each carry an N-linked (GlcNAc...) asparagine glycan. A helical transmembrane segment spans residues 517–537 (IVFLGLCILAGILMVIAIVVL). The Cytoplasmic portion of the chain corresponds to 538-540 (MLL).

It localises to the membrane. This is CUB domain-containing protein 2 (CDCP2) from Homo sapiens (Human).